A 170-amino-acid polypeptide reads, in one-letter code: NADH-quinone oxidoreductase subunit B (170 aa).

Residues cysteine 37, cysteine 38, cysteine 102, and cysteine 131 each contribute to the [4Fe-4S] cluster site.

It belongs to the complex I 20 kDa subunit family. As to quaternary structure, NDH-1 is composed of 14 different subunits. Subunits NuoB, C, D, E, F, and G constitute the peripheral sector of the complex. [4Fe-4S] cluster is required as a cofactor.

It is found in the cell inner membrane. The enzyme catalyses a quinone + NADH + 5 H(+)(in) = a quinol + NAD(+) + 4 H(+)(out). Its function is as follows. NDH-1 shuttles electrons from NADH, via FMN and iron-sulfur (Fe-S) centers, to quinones in the respiratory chain. The immediate electron acceptor for the enzyme in this species is believed to be ubiquinone. Couples the redox reaction to proton translocation (for every two electrons transferred, four hydrogen ions are translocated across the cytoplasmic membrane), and thus conserves the redox energy in a proton gradient. The chain is NADH-quinone oxidoreductase subunit B from Geotalea daltonii (strain DSM 22248 / JCM 15807 / FRC-32) (Geobacter daltonii).